Reading from the N-terminus, the 164-residue chain is FMN reductase (NADH) RutF (164 aa).

This sequence belongs to the non-flavoprotein flavin reductase family. RutF subfamily.

The enzyme catalyses FMNH2 + NAD(+) = FMN + NADH + 2 H(+). Its function is as follows. Catalyzes the reduction of FMN to FMNH2 which is used to reduce pyrimidine by RutA via the Rut pathway. The protein is FMN reductase (NADH) RutF of Escherichia coli O150:H5 (strain SE15).